Here is a 128-residue protein sequence, read N- to C-terminus: AESSAMKFQRQHVDSEGSSSSNANYCNEMMVRRKMTQDRCKPVNTFVHEPLADVQAVCFQKNVPCKNGQTNCYQSYSSMHITDCRVTSNSKFPDCSYRTTQAQKSIVVACEGNLYVPVHFDASVEPST.

Residues 1–23 (AESSAMKFQRQHVDSEGSSSSNA) are disordered. The substrate site is built by lysine 7 and arginine 10. Histidine 12 (proton acceptor) is an active-site residue. 4 disulfides stabilise this stretch: cysteine 26–cysteine 84, cysteine 40–cysteine 95, cysteine 58–cysteine 110, and cysteine 65–cysteine 72. Substrate-binding positions include 41-45 (KPVNT), lysine 66, and arginine 85. Catalysis depends on histidine 119, which acts as the Proton donor.

Belongs to the pancreatic ribonuclease family. As to quaternary structure, monomer. Interacts with and forms tight 1:1 complexes with RNH1. Dimerization of two such complexes may occur. Interaction with RNH1 inhibits this protein. In terms of tissue distribution, pancreas.

It localises to the secreted. The catalysed reaction is an [RNA] containing cytidine + H2O = an [RNA]-3'-cytidine-3'-phosphate + a 5'-hydroxy-ribonucleotide-3'-[RNA].. The enzyme catalyses an [RNA] containing uridine + H2O = an [RNA]-3'-uridine-3'-phosphate + a 5'-hydroxy-ribonucleotide-3'-[RNA].. In terms of biological role, endonuclease that catalyzes the cleavage of RNA on the 3' side of pyrimidine nucleotides. Acts on single-stranded and double-stranded RNA. This Hydrochoerus hydrochaeris (Capybara) protein is Ribonuclease pancreatic (RNASE1).